The primary structure comprises 436 residues: UPF0597 protein YhaM (436 aa).

It belongs to the UPF0597 family.

In Salmonella newport (strain SL254), this protein is UPF0597 protein YhaM.